We begin with the raw amino-acid sequence, 292 residues long: REEYPDRIMNTFSVVPSPKVSDTVVEPYNATLSVHQLVENTDETYCIDNEALYDICFRTLKLTTPTYGDLNHLVSATMSGVTTCLRFPGQLNADLRKLAVNMVPFPRLHFFMPGFAPLTSRGSQQYRALTVPELTQQMFDAKNMMAACDPRHGRYLTVAAIFRGRMSMKEVDEQMLNVQNKNSSYFVEWIPNNVKTAVCDIPPRGLKMSATFIGNSTAIQELFKRISEQFTAMFRRKAFLHWYTGEGMDEMEFTEAESNMNDLVSEYQQYQDATAEEEGEFDEEEEGDEEAA.

Residues Asn-49 and Asn-71 each contribute to the GTP site. Residues 265–292 (SEYQQYQDATAEEEGEFDEEEEGDEEAA) form a disordered region. The segment covering 274-292 (TAEEEGEFDEEEEGDEEAA) has biased composition (acidic residues).

This sequence belongs to the tubulin family. As to quaternary structure, dimer of alpha and beta chains. A typical microtubule is a hollow water-filled tube with an outer diameter of 25 nm and an inner diameter of 15 nM. Alpha-beta heterodimers associate head-to-tail to form protofilaments running lengthwise along the microtubule wall with the beta-tubulin subunit facing the microtubule plus end conferring a structural polarity. Microtubules usually have 13 protofilaments but different protofilament numbers can be found in some organisms and specialized cells. Requires Mg(2+) as cofactor.

The protein resides in the cytoplasm. The protein localises to the cytoskeleton. Its function is as follows. Tubulin is the major constituent of microtubules, a cylinder consisting of laterally associated linear protofilaments composed of alpha- and beta-tubulin heterodimers. Microtubules grow by the addition of GTP-tubulin dimers to the microtubule end, where a stabilizing cap forms. Below the cap, tubulin dimers are in GDP-bound state, owing to GTPase activity of alpha-tubulin. The chain is Tubulin beta chain from Strongylocentrotus purpuratus (Purple sea urchin).